Consider the following 418-residue polypeptide: UDP-N-acetylglucosamine 1-carboxyvinyltransferase (418 aa).

A phosphoenolpyruvate-binding site is contributed by 22-23 (KN). Arg93 contacts UDP-N-acetyl-alpha-D-glucosamine. The active-site Proton donor is Cys117. 2-(S-cysteinyl)pyruvic acid O-phosphothioketal is present on Cys117. 2 residues coordinate UDP-N-acetyl-alpha-D-glucosamine: Asp305 and Val327.

Belongs to the EPSP synthase family. MurA subfamily.

It localises to the cytoplasm. The catalysed reaction is phosphoenolpyruvate + UDP-N-acetyl-alpha-D-glucosamine = UDP-N-acetyl-3-O-(1-carboxyvinyl)-alpha-D-glucosamine + phosphate. The protein operates within cell wall biogenesis; peptidoglycan biosynthesis. Cell wall formation. Adds enolpyruvyl to UDP-N-acetylglucosamine. The polypeptide is UDP-N-acetylglucosamine 1-carboxyvinyltransferase (Halorhodospira halophila (strain DSM 244 / SL1) (Ectothiorhodospira halophila (strain DSM 244 / SL1))).